The chain runs to 95 residues: MLFYSFFKSLVGKDVVVELKNDLSICGTLHSVDQYLNIKLTDISVTDPEKYPHMLSVKNCFIRGSVVRYVQLPADEVDTQLLQDAARKEALQQKQ.

The Sm domain occupies 2–76; the sequence is LFYSFFKSLV…VRYVQLPADE (75 aa). Phosphothreonine is present on threonine 79.

The protein belongs to the snRNP Sm proteins family. As to quaternary structure, component of the precatalytic spliceosome (spliceosome B complex). Component of the U4/U6-U5 tri-snRNP complex, a building block of the precatalytic spliceosome (spliceosome B complex). The U4/U6-U5 tri-snRNP complex is composed of the U4, U6 and U5 snRNAs and at least PRPF3, PRPF4, PRPF6, PRPF8, PRPF31, SNRNP200, TXNL4A, SNRNP40, SNRPB, SNRPD1, SNRPD2, SNRPD3, SNRPE, SNRPF, SNRPG, DDX23, CD2BP2, PPIH, SNU13, EFTUD2, SART1 and USP39, plus LSM2, LSM3, LSM4, LSM5, LSM6, LSM7 and LSM8. LSM2, LSM3, LSM4, LSM5, LSM6, LSM7 and LSM8 form a heptameric, ring-shaped subcomplex (the LSM2-8 complex) that is part of the U4/U6-U5 tri-snRNP complex and the precatalytic spliceosome.

It localises to the nucleus. Plays a role in pre-mRNA splicing as component of the U4/U6-U5 tri-snRNP complex that is involved in spliceosome assembly, and as component of the precatalytic spliceosome (spliceosome B complex). The heptameric LSM2-8 complex binds specifically to the 3'-terminal U-tract of U6 snRNA. The chain is U6 snRNA-associated Sm-like protein LSm2 (LSM2) from Homo sapiens (Human).